Reading from the N-terminus, the 350-residue chain is Protein TRIGALACTOSYLDIACYLGLYCEROL 1, chloroplastic (350 aa).

Positions 67–86 (SMSMLEEETSTENNAPSQEA) are disordered. Residues 98–117 (YIWRGLSVPIIAGQVVLRIL) traverse the membrane as a helical segment. At 118–136 (KGKIHWRNTLQQLERTGPK) the chain is on the stromal side. Residues 137-157 (SLGVCLLTSTFVGMAFTIQFV) form a helical membrane-spanning segment. The Chloroplast intermembrane segment spans residues 158-168 (REFTRLGLNRS). The chain crosses the membrane as a helical span at residues 169–189 (IGGVLALAFSRELSPVITSIV). Residues 190–229 (VAGRMGSAFAAELGTMQVSEQTDTLRVLGADPIDYLITPR) lie on the Stromal side of the membrane. Residues 230 to 250 (VIASCLALPFLTLMCFTVGMA) form a helical membrane-spanning segment. The Chloroplast intermembrane segment spans residues 251–288 (SSALLSDAVYGISINIIMDSAHRALRPWDIVSAMIKSQ). A helical membrane pass occupies residues 289–309 (VFGAIISVISCSWGVTTTGGA). The Stromal segment spans residues 310–318 (KGVGESTTS). Residues 319–339 (AVVMSLVGIFIADFVLSSFFF) traverse the membrane as a helical segment. The Chloroplast intermembrane portion of the chain corresponds to 340–350 (QGAGDSLKNCV).

Belongs to the MlaE permease family. In terms of assembly, permease subunit of the TGD complex, a lipid translocator at the inner chloroplast envelope membrane made of TGD1, TGD2 and TGD3. Interacts with TGD2 and TGD3 with an overall subunit stoichiometry of 2 TGD1, 2 TGD3 and 8 to 12 TGD2. Interacts with TGD5. As to expression, high levels in green tissues, but low levels in nongreen tissues such as roots.

It localises to the plastid. Its subcellular location is the chloroplast inner membrane. Functionally, required during embryogenesis. Permease involved in lipid transfer from the endoplasmic reticulum (ER) to plastids, and necessary for thylakoids formation. This is Protein TRIGALACTOSYLDIACYLGLYCEROL 1, chloroplastic from Arabidopsis thaliana (Mouse-ear cress).